The chain runs to 788 residues: MTKPVADTSAVLTSEDTLVLASMGSPVEMQLIMDWLGEQRARTPGAKFDVLKLPPRNAPTAALTALVEQLESGSEAGADRSIVPVQVFWQPPADRSRLAKVAGLLPGRDPYHPNPRQQRRILRSDPQRARVMAGESATVSELRKQWRDNTVGEDQHDFAHFVARRAILALARAEYRILGPQYKSPRLVKPEMLASARFRAGLEKIPGATVEEAGKMLDELATGWSQASVDVFSVLGRLISRGFDPEFDYDEYQVAAMRTALEAHPAVLLFSHRSYIDGAVVPVAMQDNRLPPVHMFGGVNLSFGVMGPLMRRAGMIFIRRNIAGDPLYKYVLKEYVGYVVEKRFNLSWSIEGTRSRTGKMLPPKLGLMSYVADAYLDGRSDDILLQGVSICFDQLHEIAEYAAYARGAEKTPEGFSWLYNFIKAQGERNYGKIYVRFPEAVSMRQYLGVPHGPITHDLAAKRLALQKMSFEVAWRILRATPMTATGLVCALLLTARGTALTLGQLHHTLQDSLDYLERKQTPMSTSALRLRSREGVRAAVDALSNAHPVTRVDSGREPVWYIAPEDELAAAFYRNSVIHAFLETSIVELALAHARHAEGDRMAAFWDQVMRLRDLLKFDFYFADSAAFRANIAEEMAWHRDWESQVAAGGDQIDAILYAKRPLISDAMLRVFFEAYAIVADVLRDAPANIKQKDLTDLALGLGRQYVAQARVRSSEPVSTLLFATARQVVDDQHLIEPAPDLTERRSAFLAELRNILRDFDYVGKIARNRFVARELKARQERLEQQAQ.

The interval 104 to 135 (LLPGRDPYHPNPRQQRRILRSDPQRARVMAGE) is disordered. The HXXXXD motif signature appears at 271–276 (SHRSYI).

It belongs to the GPAT/DAPAT family.

It localises to the cell membrane. It carries out the reaction sn-glycerol 3-phosphate + an acyl-CoA = a 1-acyl-sn-glycero-3-phosphate + CoA. It participates in phospholipid metabolism; CDP-diacylglycerol biosynthesis; CDP-diacylglycerol from sn-glycerol 3-phosphate: step 1/3. This is Glycerol-3-phosphate acyltransferase from Mycobacterium marinum (strain ATCC BAA-535 / M).